Here is a 220-residue protein sequence, read N- to C-terminus: Fructose-6-phosphate aldolase (220 aa).

The Schiff-base intermediate with substrate role is filled by Lys-85.

It belongs to the transaldolase family. Type 3A subfamily. As to quaternary structure, homodecamer.

The protein resides in the cytoplasm. It catalyses the reaction beta-D-fructose 6-phosphate = dihydroxyacetone + D-glyceraldehyde 3-phosphate. Its function is as follows. Catalyzes the reversible formation of fructose 6-phosphate from dihydroxyacetone and D-glyceraldehyde 3-phosphate via an aldolization reaction. The chain is Fructose-6-phosphate aldolase from Salmonella typhi.